A 376-amino-acid chain; its full sequence is Succinyl-diaminopimelate desuccinylase (376 aa).

His67 serves as a coordination point for Zn(2+). Asp69 is an active-site residue. Asp100 provides a ligand contact to Zn(2+). Glu134 serves as the catalytic Proton acceptor. Zn(2+) is bound by residues Glu135, Glu163, and His349.

Belongs to the peptidase M20A family. DapE subfamily. Homodimer. Zn(2+) serves as cofactor. Co(2+) is required as a cofactor.

The enzyme catalyses N-succinyl-(2S,6S)-2,6-diaminopimelate + H2O = (2S,6S)-2,6-diaminopimelate + succinate. It participates in amino-acid biosynthesis; L-lysine biosynthesis via DAP pathway; LL-2,6-diaminopimelate from (S)-tetrahydrodipicolinate (succinylase route): step 3/3. In terms of biological role, catalyzes the hydrolysis of N-succinyl-L,L-diaminopimelic acid (SDAP), forming succinate and LL-2,6-diaminopimelate (DAP), an intermediate involved in the bacterial biosynthesis of lysine and meso-diaminopimelic acid, an essential component of bacterial cell walls. This is Succinyl-diaminopimelate desuccinylase from Xanthomonas campestris pv. campestris (strain B100).